The chain runs to 382 residues: Mannitol-1-phosphate 5-dehydrogenase (382 aa).

3–14 (AVHFGAGNIGRG) serves as a coordination point for NAD(+).

This sequence belongs to the mannitol dehydrogenase family.

It catalyses the reaction D-mannitol 1-phosphate + NAD(+) = beta-D-fructose 6-phosphate + NADH + H(+). The chain is Mannitol-1-phosphate 5-dehydrogenase (mtlD) from Geobacillus stearothermophilus (Bacillus stearothermophilus).